A 506-amino-acid chain; its full sequence is Cobyric acid synthase (506 aa).

Residues 251-448 (DITIAIVQLP…LHGLFDSDAF (198 aa)) form the GATase cobBQ-type domain. The active-site Nucleophile is cysteine 332. Residue histidine 440 is part of the active site.

Belongs to the CobB/CobQ family. CobQ subfamily.

It functions in the pathway cofactor biosynthesis; adenosylcobalamin biosynthesis. Functionally, catalyzes amidations at positions B, D, E, and G on adenosylcobyrinic A,C-diamide. NH(2) groups are provided by glutamine, and one molecule of ATP is hydrogenolyzed for each amidation. In Salmonella choleraesuis (strain SC-B67), this protein is Cobyric acid synthase.